Consider the following 308-residue polypeptide: MIIVTGGAGFIGSNIVKALNDLGRKDILVVDNLKDGTKFANLVDLDIADYCDKEDFIASIIAGDEFGDIDAVFHEGACSATTEWDGKYIMHNNYEYSKELLHYCLDREIPFFYASSAATYGDTKVFREEREFEGPLNVYGYSKFLFDQYVRNILPEAKSPVCGFRYFNVYGPRENHKGSMASVAFHLNNQILKGENPKLFAGSEHFRRDFVYVGDVAAVNIWCWQNGISGIYNLGTGNAESFRAVADAVVKFHGKGEIETIPFPEHLKSRYQEYTQADLTKLRSTGYDKPFKTVAEGVTEYMAWLNRK.

Residues 10 to 11, 31 to 32, lysine 38, lysine 53, 75 to 79, and asparagine 92 contribute to the NADP(+) site; these read FI, DN, and EGACS. Tyrosine 139 (proton acceptor) is an active-site residue. Lysine 143 contributes to the NADP(+) binding site. Asparagine 168 serves as a coordination point for substrate. Residues valine 169 and lysine 177 each coordinate NADP(+). Catalysis depends on lysine 177, which acts as the Proton acceptor. Substrate is bound by residues serine 179, histidine 186, 200-203, arginine 208, and tyrosine 271; that span reads FAGS.

This sequence belongs to the NAD(P)-dependent epimerase/dehydratase family. HldD subfamily. Homopentamer. NADP(+) serves as cofactor.

It carries out the reaction ADP-D-glycero-beta-D-manno-heptose = ADP-L-glycero-beta-D-manno-heptose. The protein operates within nucleotide-sugar biosynthesis; ADP-L-glycero-beta-D-manno-heptose biosynthesis; ADP-L-glycero-beta-D-manno-heptose from D-glycero-beta-D-manno-heptose 7-phosphate: step 4/4. Its pathway is bacterial outer membrane biogenesis; LOS core biosynthesis. Functionally, catalyzes the interconversion between ADP-D-glycero-beta-D-manno-heptose and ADP-L-glycero-beta-D-manno-heptose via an epimerization at carbon 6 of the heptose. The polypeptide is ADP-L-glycero-D-manno-heptose-6-epimerase (Haemophilus influenzae (strain ATCC 51907 / DSM 11121 / KW20 / Rd)).